The sequence spans 275 residues: 3',5'-cyclic adenosine monophosphate phosphodiesterase CpdA (275 aa).

Fe cation-binding residues include Asp22, His24, Asp64, Asn94, His164, His203, and His205. AMP is bound by residues His24, Asp64, and 94–95; that span reads NH. Residue His205 participates in AMP binding.

Belongs to the cyclic nucleotide phosphodiesterase class-III family. Fe(2+) serves as cofactor.

It carries out the reaction 3',5'-cyclic AMP + H2O = AMP + H(+). Functionally, hydrolyzes cAMP to 5'-AMP. Plays an important regulatory role in modulating the intracellular concentration of cAMP, thereby influencing cAMP-dependent processes. The protein is 3',5'-cyclic adenosine monophosphate phosphodiesterase CpdA of Escherichia coli O157:H7.